The sequence spans 1088 residues: DNA polymerase II large subunit (1088 aa).

This sequence belongs to the archaeal DNA polymerase II family. Heterodimer of a large subunit and a small subunit.

It catalyses the reaction DNA(n) + a 2'-deoxyribonucleoside 5'-triphosphate = DNA(n+1) + diphosphate. The catalysed reaction is Exonucleolytic cleavage in the 3'- to 5'-direction to yield nucleoside 5'-phosphates.. In terms of biological role, possesses two activities: a DNA synthesis (polymerase) and an exonucleolytic activity that degrades single-stranded DNA in the 3'- to 5'-direction. Has a template-primer preference which is characteristic of a replicative DNA polymerase. This chain is DNA polymerase II large subunit (polC), found in Thermoplasma volcanium (strain ATCC 51530 / DSM 4299 / JCM 9571 / NBRC 15438 / GSS1).